Consider the following 295-residue polypeptide: Small ribosomal subunit protein uS2 (295 aa).

Residues 260–295 (KQAKKFSKTKNIDEETNTEFEQALNDADENKNSDNA) form a disordered region.

The protein belongs to the universal ribosomal protein uS2 family.

The chain is Small ribosomal subunit protein uS2 from Rickettsia felis (strain ATCC VR-1525 / URRWXCal2) (Rickettsia azadi).